Here is a 1229-residue protein sequence, read N- to C-terminus: Putative cell division cycle ATPase (1229 aa).

Residues 252 to 267 (GKKNNNGNVKKGIKNV) are compositionally biased toward low complexity. The interval 252 to 315 (GKKNNNGNVK…GGKNNSYYNE (64 aa)) is disordered. Residues 268–281 (PMDEKSYSPNDHDN) show a composition bias toward basic and acidic residues. Residues 282–314 (NSNNSNNNNNNDNNNSNNNNNNNNGGKNNSYYN) are compositionally biased toward low complexity. 568–575 (GIPGTGKT) lines the ATP pocket. Disordered stretches follow at residues 814-837 (TLLQNDKNEMNKDSSYDKKTDALD) and 860-892 (FSNDDEETKNKNKTNVNQKKKKNPNDKLDKNER). Basic and acidic residues-rich tracts occupy residues 819 to 837 (DKNEMNKDSSYDKKTDALD) and 882 to 892 (NPNDKLDKNER). 975–982 (GPPGCGKT) lines the ATP pocket.

The protein belongs to the AAA ATPase family.

In Plasmodium falciparum (isolate 3D7), this protein is Putative cell division cycle ATPase.